The sequence spans 361 residues: Cyclic AMP receptor-like protein C (361 aa).

Residues 1–18 lie on the Extracellular side of the membrane; sequence MGIEESQICNPSDREFLS. Residues 19-39 traverse the membrane as a helical segment; the sequence is VDILNIVTSSLSLMGSALTII. The Cytoplasmic segment spans residues 40–113; sequence SYIWKKVRRH…HGTYKQPTSK (74 aa). The helical transmembrane segment at 114–134 threads the bilayer; the sequence is LPLLIFMLSIADFFTSFFIII. At 135-166 the chain is on the extracellular side; sequence SQSYLINNSKSYSTPYSPDLKIHFSPCIILRA. The chain crosses the membrane as a helical span at residues 167 to 187; that stretch reads IIQFFFLSTFFWTTCISYYLF. At 188–197 the chain is on the cytoplasmic side; that stretch reads HQLSSPGEEK. Residues 198–218 traverse the membrane as a helical segment; sequence YLLAIFNVVSWGIPFAISMVI. The Extracellular segment spans residues 219 to 238; sequence TMTNSIVVNSDGWCEVAKPM. The chain crosses the membrane as a helical span at residues 239-259; the sequence is ELSLWFLPLFLCLLVCSIYYF. Over 260–292 the chain is Cytoplasmic; sequence RLRRLFRSKFEYRLQINDRLKQLDSTISRRLTL. The chain crosses the membrane as a helical span at residues 293–313; that stretch reads YIVVFVICWLPDVIQHFISFF. The Extracellular portion of the chain corresponds to 314–318; that stretch reads SKCTF. The helical transmembrane segment at 319 to 339 threads the bilayer; that stretch reads FPLLILQNILTPSQGFWNFWI. The Cytoplasmic portion of the chain corresponds to 340–361; that stretch reads YSYTNKIARFTPSNDENKRLLQ.

Belongs to the G-protein coupled receptor 5 family.

It localises to the membrane. In terms of biological role, receptor for cAMP. The chain is Cyclic AMP receptor-like protein C (crlC) from Dictyostelium discoideum (Social amoeba).